Reading from the N-terminus, the 150-residue chain is Catabolic 3-dehydroquinase (150 aa).

Catalysis depends on Tyr-24, which acts as the Proton acceptor. Residues Asn-75, His-81, and Asp-88 each contribute to the substrate site. His-101 (proton donor) is an active-site residue. Substrate-binding positions include 102–103 (VS) and Arg-112.

Belongs to the type-II 3-dehydroquinase family. Homododecamer. Adopts a ring-like structure, composed of an arrangement of two hexameric rings stacked on top of one another.

The enzyme catalyses 3-dehydroquinate = 3-dehydroshikimate + H2O. Its pathway is aromatic compound metabolism; 3,4-dihydroxybenzoate biosynthesis; 3,4-dihydroxybenzoate from 3-dehydroquinate: step 1/2. Its function is as follows. Is involved in the catabolism of quinate. Allows the utilization of quinate as carbon source via the beta-ketoadipate pathway. This Aspergillus clavatus (strain ATCC 1007 / CBS 513.65 / DSM 816 / NCTC 3887 / NRRL 1 / QM 1276 / 107) protein is Catabolic 3-dehydroquinase.